A 313-amino-acid chain; its full sequence is Biotin synthase (313 aa).

In terms of domain architecture, Radical SAM core spans 28–258 (NFGNDIELCS…LFPQARLRLS (231 aa)). Positions 46, 50, and 53 each coordinate [4Fe-4S] cluster. Residues C90, C121, C181, and R256 each coordinate [2Fe-2S] cluster.

Belongs to the radical SAM superfamily. Biotin synthase family. In terms of assembly, homodimer. Requires [4Fe-4S] cluster as cofactor. The cofactor is [2Fe-2S] cluster.

The catalysed reaction is (4R,5S)-dethiobiotin + (sulfur carrier)-SH + 2 reduced [2Fe-2S]-[ferredoxin] + 2 S-adenosyl-L-methionine = (sulfur carrier)-H + biotin + 2 5'-deoxyadenosine + 2 L-methionine + 2 oxidized [2Fe-2S]-[ferredoxin]. It participates in cofactor biosynthesis; biotin biosynthesis; biotin from 7,8-diaminononanoate: step 2/2. Functionally, catalyzes the conversion of dethiobiotin (DTB) to biotin by the insertion of a sulfur atom into dethiobiotin via a radical-based mechanism. This chain is Biotin synthase, found in Francisella philomiragia subsp. philomiragia (strain ATCC 25017 / CCUG 19701 / FSC 153 / O#319-036).